The sequence spans 163 residues: Putative pre-16S rRNA nuclease (163 aa).

The protein belongs to the YqgF nuclease family.

It localises to the cytoplasm. In terms of biological role, could be a nuclease involved in processing of the 5'-end of pre-16S rRNA. In Rhodopseudomonas palustris (strain BisB18), this protein is Putative pre-16S rRNA nuclease.